Reading from the N-terminus, the 389-residue chain is Flap endonuclease 1 (389 aa).

The tract at residues 1–110 (MGIKGLMKLL…GELAKRSDRR (110 aa)) is N-domain. D35 serves as a coordination point for Mg(2+). Residues R48 and R76 each coordinate DNA. D92 lines the Mg(2+) pocket. Positions 103–124 (LAKRSDRRQEAQKALEEATEKG) are disordered. An I-domain region spans residues 128 to 259 (DIDRFNKRLV…KKAYAGIKEH (132 aa)). The Mg(2+) site is built by E164, E166, D185, and D187. Residue E164 coordinates DNA. Residues G237 and D239 each coordinate DNA. D239 is a binding site for Mg(2+). The segment at 350-358 (SQKRLDSFF) is interaction with PCNA. Positions 362-389 (PSANGAKKRKAPAAKGGKKAATAKKGKK) are disordered. Positions 367–389 (AKKRKAPAAKGGKKAATAKKGKK) are enriched in basic residues.

This sequence belongs to the XPG/RAD2 endonuclease family. FEN1 subfamily. Interacts with PCNA. Three molecules of FEN1 bind to one PCNA trimer with each molecule binding to one PCNA monomer. PCNA stimulates the nuclease activity without altering cleavage specificity. Mg(2+) serves as cofactor. In terms of processing, phosphorylated. Phosphorylation upon DNA damage induces relocalization to the nuclear plasma.

It is found in the nucleus. Its subcellular location is the nucleolus. It localises to the nucleoplasm. The protein resides in the mitochondrion. Structure-specific nuclease with 5'-flap endonuclease and 5'-3' exonuclease activities involved in DNA replication and repair. During DNA replication, cleaves the 5'-overhanging flap structure that is generated by displacement synthesis when DNA polymerase encounters the 5'-end of a downstream Okazaki fragment. It enters the flap from the 5'-end and then tracks to cleave the flap base, leaving a nick for ligation. Also involved in the long patch base excision repair (LP-BER) pathway, by cleaving within the apurinic/apyrimidinic (AP) site-terminated flap. Acts as a genome stabilization factor that prevents flaps from equilibrating into structures that lead to duplications and deletions. Also possesses 5'-3' exonuclease activity on nicked or gapped double-stranded DNA, and exhibits RNase H activity. Also involved in replication and repair of rDNA and in repairing mitochondrial DNA. This chain is Flap endonuclease 1, found in Phytophthora infestans (strain T30-4) (Potato late blight agent).